A 303-amino-acid chain; its full sequence is Peptidyl-prolyl isomerase CWC27 (303 aa).

The 147-residue stretch at 7 to 153 (ASGKCVLYTT…AEVTIPYFDG (147 aa)) folds into the PPIase cyclophilin-type domain. Disordered stretches follow at residues 155 to 195 (SGQK…PPLD) and 208 to 274 (ERLT…TDLA).

This sequence belongs to the cyclophilin-type PPIase family. CWC27 subfamily. In terms of assembly, associated with the spliceosome.

It is found in the cytoplasm. The protein resides in the nucleus. The enzyme catalyses [protein]-peptidylproline (omega=180) = [protein]-peptidylproline (omega=0). Its function is as follows. PPIases accelerate the folding of proteins. It catalyzes the cis-trans isomerization of proline imidic peptide bonds in oligopeptides. Involved in pre-mRNA splicing. The sequence is that of Peptidyl-prolyl isomerase CWC27 (CWC27) from Eremothecium gossypii (strain ATCC 10895 / CBS 109.51 / FGSC 9923 / NRRL Y-1056) (Yeast).